A 1538-amino-acid chain; its full sequence is Pentafunctional AROM polypeptide (1538 aa).

The segment at 1-384 is 3-dehydroquinate synthase; sequence MGVPTKISIL…HEPRASTVSN (384 aa). NAD(+) is bound by residues 44–46, 81–84, 114–116, and Asp119; these read DTN, ESSK, and GGV. Arg130 provides a ligand contact to 7-phospho-2-dehydro-3-deoxy-D-arabino-heptonate. 139–140 is a binding site for NAD(+); the sequence is TT. Residues Asp146 and Lys152 each coordinate 7-phospho-2-dehydro-3-deoxy-D-arabino-heptonate. Lys161 lines the NAD(+) pocket. Asn162 contacts 7-phospho-2-dehydro-3-deoxy-D-arabino-heptonate. NAD(+) contacts are provided by residues 179–182 and Asn190; that span reads FLNT. Glu194 contacts Zn(2+). Residues 194 to 197 and Lys250 each bind 7-phospho-2-dehydro-3-deoxy-D-arabino-heptonate; that span reads EVIK. Glu260 serves as the catalytic Proton acceptor; for 3-dehydroquinate synthase activity. 7-phospho-2-dehydro-3-deoxy-D-arabino-heptonate-binding positions include 264–268 and His271; that span reads RNLLN. His271 lines the Zn(2+) pocket. The active-site Proton acceptor; for 3-dehydroquinate synthase activity is the His275. Residues His287 and Lys356 each coordinate 7-phospho-2-dehydro-3-deoxy-D-arabino-heptonate. His287 contacts Zn(2+). Positions 397-842 are EPSP synthase; sequence VSPGVPKGLD…WDCLSQTFKV (446 aa). Cys824 functions as the For EPSP synthase activity in the catalytic mechanism. The shikimate kinase stretch occupies residues 866-973; sequence ASIFIIGMRG…RRKQNTFFVS (108 aa). Residue 872-879 coordinates ATP; sequence GMRGAGKT. Residues 974 to 1194 are 3-dehydroquinase; the sequence is LTLPDLGLAA…AAPGQLSARE (221 aa). The active-site Proton acceptor; for 3-dehydroquinate dehydratase activity is the His1097. The active-site Schiff-base intermediate with substrate; for 3-dehydroquinate dehydratase activity is the Lys1125. Positions 1207–1538 are shikimate dehydrogenase; the sequence is AKKFAVIGNP…YEHPVLNHSS (332 aa).

The protein in the N-terminal section; belongs to the sugar phosphate cyclases superfamily. Dehydroquinate synthase family. It in the 2nd section; belongs to the EPSP synthase family. This sequence in the 3rd section; belongs to the shikimate kinase family. In the 4th section; belongs to the type-I 3-dehydroquinase family. The protein in the C-terminal section; belongs to the shikimate dehydrogenase family. In terms of assembly, homodimer. It depends on Zn(2+) as a cofactor.

It localises to the cytoplasm. The catalysed reaction is 7-phospho-2-dehydro-3-deoxy-D-arabino-heptonate = 3-dehydroquinate + phosphate. It catalyses the reaction 3-dehydroquinate = 3-dehydroshikimate + H2O. The enzyme catalyses shikimate + NADP(+) = 3-dehydroshikimate + NADPH + H(+). It carries out the reaction shikimate + ATP = 3-phosphoshikimate + ADP + H(+). The catalysed reaction is 3-phosphoshikimate + phosphoenolpyruvate = 5-O-(1-carboxyvinyl)-3-phosphoshikimate + phosphate. It functions in the pathway metabolic intermediate biosynthesis; chorismate biosynthesis; chorismate from D-erythrose 4-phosphate and phosphoenolpyruvate: step 2/7. Its pathway is metabolic intermediate biosynthesis; chorismate biosynthesis; chorismate from D-erythrose 4-phosphate and phosphoenolpyruvate: step 3/7. It participates in metabolic intermediate biosynthesis; chorismate biosynthesis; chorismate from D-erythrose 4-phosphate and phosphoenolpyruvate: step 4/7. The protein operates within metabolic intermediate biosynthesis; chorismate biosynthesis; chorismate from D-erythrose 4-phosphate and phosphoenolpyruvate: step 5/7. It functions in the pathway metabolic intermediate biosynthesis; chorismate biosynthesis; chorismate from D-erythrose 4-phosphate and phosphoenolpyruvate: step 6/7. The AROM polypeptide catalyzes 5 consecutive enzymatic reactions in prechorismate polyaromatic amino acid biosynthesis. The polypeptide is Pentafunctional AROM polypeptide (Ajellomyces capsulatus (strain NAm1 / WU24) (Darling's disease fungus)).